Consider the following 568-residue polypeptide: Periplasmic trehalase (568 aa).

Residues 1 to 39 (MPYATARSGDVMSSAAPPCCTSLLGLSLSMFVAPGTLTA) form the signal peptide. Substrate contacts are provided by residues R169, 176 to 177 (WD), N213, 222 to 224 (RSQ), 294 to 296 (RPE), and G327. Active-site proton donor/acceptor residues include D329 and E511. E526 lines the substrate pocket.

It belongs to the glycosyl hydrolase 37 family.

It is found in the periplasm. It carries out the reaction alpha,alpha-trehalose + H2O = alpha-D-glucose + beta-D-glucose. Functionally, provides the cells with the ability to utilize trehalose at high osmolarity by splitting it into glucose molecules that can subsequently be taken up by the phosphotransferase-mediated uptake system. This is Periplasmic trehalase from Xanthomonas axonopodis pv. citri (strain 306).